Here is a 279-residue protein sequence, read N- to C-terminus: Thioredoxin domain-containing protein plp1 (279 aa).

Over residues R56–N70 the composition is skewed to basic and acidic residues. The interval R56 to T75 is disordered. One can recognise a Thioredoxin domain in the interval F137–A248. Residues E254–L267 show a composition bias toward basic and acidic residues. The tract at residues E254–E279 is disordered. Phosphoserine occurs at positions 272 and 275.

This sequence belongs to the phosducin family.

It is found in the cytoplasm. The protein localises to the nucleus. Functionally, inhibits early G-protein signaling events following pheromone stimulation. May help create heterodimerizable beta-tubulin by facilitating the efficient transfer of nascent beta-tubulin polypeptides to the folding apparatus. This is Thioredoxin domain-containing protein plp1 (plp1) from Schizosaccharomyces pombe (strain 972 / ATCC 24843) (Fission yeast).